The chain runs to 193 residues: Holliday junction branch migration complex subunit RuvA (193 aa).

Residues 1 to 64 (MIGRIQGTLV…EDAQQLFGFA (64 aa)) form a domain I region. The tract at residues 65-139 (TEIEREAFRQ…GKLAPDLGIT (75 aa)) is domain II. Residues 139–143 (TGGKP) form a flexible linker region. The domain III stretch occupies residues 144-193 (QAIEATSEVLQALLSLGYSEKEALLALKQIPPETSVSDGIRMGLKYLSKP).

This sequence belongs to the RuvA family. In terms of assembly, homotetramer. Forms an RuvA(8)-RuvB(12)-Holliday junction (HJ) complex. HJ DNA is sandwiched between 2 RuvA tetramers; dsDNA enters through RuvA and exits via RuvB. An RuvB hexamer assembles on each DNA strand where it exits the tetramer. Each RuvB hexamer is contacted by two RuvA subunits (via domain III) on 2 adjacent RuvB subunits; this complex drives branch migration. In the full resolvosome a probable DNA-RuvA(4)-RuvB(12)-RuvC(2) complex forms which resolves the HJ.

It localises to the cytoplasm. In terms of biological role, the RuvA-RuvB-RuvC complex processes Holliday junction (HJ) DNA during genetic recombination and DNA repair, while the RuvA-RuvB complex plays an important role in the rescue of blocked DNA replication forks via replication fork reversal (RFR). RuvA specifically binds to HJ cruciform DNA, conferring on it an open structure. The RuvB hexamer acts as an ATP-dependent pump, pulling dsDNA into and through the RuvAB complex. HJ branch migration allows RuvC to scan DNA until it finds its consensus sequence, where it cleaves and resolves the cruciform DNA. This Polynucleobacter asymbioticus (strain DSM 18221 / CIP 109841 / QLW-P1DMWA-1) (Polynucleobacter necessarius subsp. asymbioticus) protein is Holliday junction branch migration complex subunit RuvA.